Reading from the N-terminus, the 165-residue chain is Putative defense protein Hdd11 (165 aa).

The N-terminal stretch at 1–17 is a signal peptide; the sequence is MWATYVFIAVSLACANG. One can recognise a Reelin domain in the interval 18–165; it reads YSSGAPESVC…VESGPVKVIS (148 aa). Cysteine 27 and cysteine 104 form a disulfide bridge.

It belongs to the insect defense protein family.

The protein resides in the secreted. Its function is as follows. As this protein is expressed upon bacterial infection, it may have antimicrobial activity. This is Putative defense protein Hdd11 from Hyphantria cunea (Fall webworm moth).